Consider the following 425-residue polypeptide: Cyclin-K (425 aa).

A disordered region spans residues 262-425 (GKQPIPQQPP…RRYLDDDRNL (164 aa)). A compositionally biased stretch (low complexity) spans 366 to 377 (AEPAAASELDPA). Positions 379–399 (GPAPPLPHGAPPPLPHRPPPT) are enriched in pro residues.

The protein belongs to the cyclin family.

The protein localises to the nucleus. Regulatory subunit of cyclin-dependent kinases that mediates activation of target kinases. Plays a role in transcriptional regulation via its role in regulating the phosphorylation of the C-terminal domain (CTD) of the large subunit of RNA polymerase II (POLR2A). The polypeptide is Cyclin-K (ccnk) (Danio rerio (Zebrafish)).